Consider the following 307-residue polypeptide: Elongation factor Ts (307 aa).

Residues 80–83 form an involved in Mg(2+) ion dislocation from EF-Tu region; sequence TDFV.

This sequence belongs to the EF-Ts family.

Its subcellular location is the cytoplasm. Functionally, associates with the EF-Tu.GDP complex and induces the exchange of GDP to GTP. It remains bound to the aminoacyl-tRNA.EF-Tu.GTP complex up to the GTP hydrolysis stage on the ribosome. The sequence is that of Elongation factor Ts from Azorhizobium caulinodans (strain ATCC 43989 / DSM 5975 / JCM 20966 / LMG 6465 / NBRC 14845 / NCIMB 13405 / ORS 571).